The following is a 36-amino-acid chain: Pancreatic polypeptide (36 aa).

Y36 carries the tyrosine amide modification.

It belongs to the NPY family.

The protein localises to the secreted. Functionally, hormone secreted by pancreatic cells that acts as a regulator of pancreatic and gastrointestinal functions probably by signaling through the G protein-coupled receptor NPY4R2. In Oryctolagus cuniculus (Rabbit), this protein is Pancreatic polypeptide (PPY).